Here is a 228-residue protein sequence, read N- to C-terminus: RNA pyrophosphohydrolase (228 aa).

A unknown region spans residues 1–70 (MEKRSGIGRL…KQWVKMMNDI (70 aa)). The rppH domain stretch occupies residues 71–228 (VIDKRGFRLG…VLTEFAEFIR (158 aa)). The region spanning 76-221 (GFRLGVGMVI…KRDVYQKVLT (146 aa)) is the Nudix hydrolase domain. The short motif at 109 to 130 (GGLLPNETLREALNRELDEEVG) is the Nudix box element.

This sequence in the C-terminal section; belongs to the Nudix hydrolase family. RppH subfamily. It depends on a divalent metal cation as a cofactor.

Its function is as follows. Accelerates the degradation of transcripts by removing pyrophosphate from the 5'-end of triphosphorylated RNA, leading to a more labile monophosphorylated state that can stimulate subsequent ribonuclease cleavage. In Coxiella burnetii (strain RSA 493 / Nine Mile phase I), this protein is RNA pyrophosphohydrolase.